The chain runs to 436 residues: ATP-dependent protease ATPase subunit HslU (436 aa).

ATP is bound by residues isoleucine 18, 60–65 (GVGKTE), aspartate 250, glutamate 314, and arginine 386.

This sequence belongs to the ClpX chaperone family. HslU subfamily. In terms of assembly, a double ring-shaped homohexamer of HslV is capped on each side by a ring-shaped HslU homohexamer. The assembly of the HslU/HslV complex is dependent on binding of ATP.

It is found in the cytoplasm. Its function is as follows. ATPase subunit of a proteasome-like degradation complex; this subunit has chaperone activity. The binding of ATP and its subsequent hydrolysis by HslU are essential for unfolding of protein substrates subsequently hydrolyzed by HslV. HslU recognizes the N-terminal part of its protein substrates and unfolds these before they are guided to HslV for hydrolysis. The polypeptide is ATP-dependent protease ATPase subunit HslU (Mesorhizobium japonicum (strain LMG 29417 / CECT 9101 / MAFF 303099) (Mesorhizobium loti (strain MAFF 303099))).